A 122-amino-acid chain; its full sequence is Large ribosomal subunit protein uL14 (122 aa).

The protein belongs to the universal ribosomal protein uL14 family. In terms of assembly, part of the 50S ribosomal subunit. Forms a cluster with proteins L3 and L19. In the 70S ribosome, L14 and L19 interact and together make contacts with the 16S rRNA in bridges B5 and B8.

In terms of biological role, binds to 23S rRNA. Forms part of two intersubunit bridges in the 70S ribosome. The chain is Large ribosomal subunit protein uL14 from Sulfurihydrogenibium sp. (strain YO3AOP1).